Reading from the N-terminus, the 549-residue chain is MKRVLTALAAALPFAAHAADAISGAVERQPTNWQAIIMFLIFVVFTLGITYWASKRVRSRSDYYTAGGNITGFQNGLAIAGDYMSAASFLGISALVFTSGYDGLIYSLGFLVGWPIILFLIAERLRNLGRYTFADVASYRLKQGPIRILSACGSLVVVALYLIAQMVGAGKLIELLFGLNYHIAVVLVGVLMMMYVLFGGMLATTWVQIIKAVLLLFGASFMAFMVMKHVGFSFNNLFTEAMAVHPKGTAIMSPGGLVQDPISALSLGLGLMFGTAGLPHILMRFFTVSDAREARKSVFYATGFMGYFYILTFIIGFGAIMLVGANPAYKDAAGALIGGNNMAAVHLANAVGGNLFLGFISAVAFATILAVVAGLTLAGASAVSHDLYANVFRKGATEREELKVSKITVLVLGVIAIILGVLFENQNIAFMVGLAFAIAASCNFPIILLSMYWSKLTTRGAMLGGWLGLLTAVVLMILGPTIWVQILGHEKAIFPYEYPALFSISVAFLGIWFFSATDNSAEGNREREQFRAQFIRSQTGFGVQQGRAH.

13 consecutive transmembrane segments (helical) span residues 33–53 (WQAI…TYWA), 77–97 (LAIA…ALVF), 103–123 (GLIY…LIAE), 148–168 (ILSA…QMVG), 183–203 (IAVV…GMLA), 206–226 (WVQI…AFMV), 262–282 (ISAL…PHIL), 303–323 (GFMG…IMLV), 355–375 (LFLG…VAGL), 404–424 (VSKI…VLFE), 428–448 (IAFM…PIIL), 464–484 (GGWL…TIWV), and 493–513 (IFPY…GIWF).

The protein belongs to the sodium:solute symporter (SSF) (TC 2.A.21) family.

Its subcellular location is the cell inner membrane. Its function is as follows. Transports acetate. The chain is Cation/acetate symporter ActP from Salmonella agona (strain SL483).